The chain runs to 282 residues: Acetyl-coenzyme A carboxylase carboxyl transferase subunit beta (282 aa).

Residues 26–282 enclose the CoA carboxyltransferase N-terminal domain; it reads GLWHQTPTGK…VSKTVKLLVH (257 aa).

The protein belongs to the AccD/PCCB family. Acetyl-CoA carboxylase is a heterohexamer composed of biotin carboxyl carrier protein (AccB), biotin carboxylase (AccC) and two subunits each of ACCase subunit alpha (AccA) and ACCase subunit beta (AccD).

The protein localises to the cytoplasm. The enzyme catalyses N(6)-carboxybiotinyl-L-lysyl-[protein] + acetyl-CoA = N(6)-biotinyl-L-lysyl-[protein] + malonyl-CoA. It functions in the pathway lipid metabolism; malonyl-CoA biosynthesis; malonyl-CoA from acetyl-CoA: step 1/1. In terms of biological role, component of the acetyl coenzyme A carboxylase (ACC) complex. Biotin carboxylase (BC) catalyzes the carboxylation of biotin on its carrier protein (BCCP) and then the CO(2) group is transferred by the transcarboxylase to acetyl-CoA to form malonyl-CoA. This is Acetyl-coenzyme A carboxylase carboxyl transferase subunit beta from Flavobacteriaceae bacterium (strain 3519-10).